A 571-amino-acid polypeptide reads, in one-letter code: Transcription factor ABORTED MICROSPORES (571 aa).

Positions 275–284 (NDKDMNENGR) are enriched in basic and acidic residues. Disordered regions lie at residues 275–321 (NDKD…AERR), 365–390 (ELQD…MSLN), and 536–571 (DDHQ…YHNQ). In terms of domain architecture, bHLH spans 310-359 (GSQAKNLMAERRRRKKLNDRLYALRSLVPRITKLDRASILGDAINYVKEL). Acidic residues predominate over residues 368 to 378 (DELEENSETED). A compositionally biased stretch (polar residues) spans 381 to 390 (NRPQGGMSLN). Basic residues predominate over residues 556–571 (AHHHHHHQHINHYHNQ).

As to quaternary structure, homodimer. Interacts with ASHR3. In terms of tissue distribution, mostly expressed in closed, post-meiotic buds, and, to a lower extent, in pre-meiotic buds. Detected in leaves, stems, and flowers.

It is found in the nucleus. Transcription factor. Plays a crucial role in tapetum development. Required for male fertility and pollen differentiation, especially during the post-meiotic transcriptional regulation of microspore development within the developing anther. Binds E-box regions in the AHL16/TEK promoter. This Arabidopsis thaliana (Mouse-ear cress) protein is Transcription factor ABORTED MICROSPORES (AMS).